A 209-amino-acid chain; its full sequence is Tektin bundle-interacting protein 1 (209 aa).

In terms of assembly, microtubule inner protein component of sperm flagellar doublet microtubules.

It is found in the cytoplasm. The protein localises to the cytoskeleton. It localises to the cilium axoneme. The protein resides in the flagellum axoneme. Microtubule inner protein (MIP) part of the dynein-decorated doublet microtubules (DMTs) in cilia axoneme, which is required for motile cilia beating. Located at the center of the tektin bundle where may function to recruit tektins or stabilize the bundle. This Macaca fascicularis (Crab-eating macaque) protein is Tektin bundle-interacting protein 1 (TEKTIP1).